The sequence spans 345 residues: tRNA N6-adenosine threonylcarbamoyltransferase (345 aa).

Fe cation is bound by residues His-111 and His-115. Residues 134–138 (LVSGG), Asp-167, Gly-180, and Asn-277 contribute to the substrate site. Asp-305 contributes to the Fe cation binding site.

It belongs to the KAE1 / TsaD family. Fe(2+) is required as a cofactor.

The protein resides in the cytoplasm. It catalyses the reaction L-threonylcarbamoyladenylate + adenosine(37) in tRNA = N(6)-L-threonylcarbamoyladenosine(37) in tRNA + AMP + H(+). Its function is as follows. Required for the formation of a threonylcarbamoyl group on adenosine at position 37 (t(6)A37) in tRNAs that read codons beginning with adenine. Is involved in the transfer of the threonylcarbamoyl moiety of threonylcarbamoyl-AMP (TC-AMP) to the N6 group of A37, together with TsaE and TsaB. TsaD likely plays a direct catalytic role in this reaction. The protein is tRNA N6-adenosine threonylcarbamoyltransferase of Laribacter hongkongensis (strain HLHK9).